The primary structure comprises 254 residues: 3-deoxy-manno-octulosonate cytidylyltransferase (254 aa).

The protein belongs to the KdsB family.

The protein resides in the cytoplasm. The enzyme catalyses 3-deoxy-alpha-D-manno-oct-2-ulosonate + CTP = CMP-3-deoxy-beta-D-manno-octulosonate + diphosphate. It functions in the pathway nucleotide-sugar biosynthesis; CMP-3-deoxy-D-manno-octulosonate biosynthesis; CMP-3-deoxy-D-manno-octulosonate from 3-deoxy-D-manno-octulosonate and CTP: step 1/1. Its pathway is bacterial outer membrane biogenesis; lipopolysaccharide biosynthesis. Functionally, activates KDO (a required 8-carbon sugar) for incorporation into bacterial lipopolysaccharide in Gram-negative bacteria. The chain is 3-deoxy-manno-octulosonate cytidylyltransferase from Pseudomonas putida (strain GB-1).